The chain runs to 130 residues: UPF0102 protein RPA0323 (130 aa).

Belongs to the UPF0102 family.

The protein is UPF0102 protein RPA0323 of Rhodopseudomonas palustris (strain ATCC BAA-98 / CGA009).